Here is an 82-residue protein sequence, read N- to C-terminus: Sulfur carrier protein TusA (82 aa).

Cysteine 19 serves as the catalytic Cysteine persulfide intermediate.

It belongs to the sulfur carrier protein TusA family.

It localises to the cytoplasm. In terms of biological role, sulfur carrier protein which probably makes part of a sulfur-relay system. The sequence is that of Sulfur carrier protein TusA from Tolumonas auensis (strain DSM 9187 / NBRC 110442 / TA 4).